A 100-amino-acid polypeptide reads, in one-letter code: Aspartyl/glutamyl-tRNA(Asn/Gln) amidotransferase subunit C (100 aa).

This sequence belongs to the GatC family. As to quaternary structure, heterotrimer of A, B and C subunits.

It carries out the reaction L-glutamyl-tRNA(Gln) + L-glutamine + ATP + H2O = L-glutaminyl-tRNA(Gln) + L-glutamate + ADP + phosphate + H(+). The enzyme catalyses L-aspartyl-tRNA(Asn) + L-glutamine + ATP + H2O = L-asparaginyl-tRNA(Asn) + L-glutamate + ADP + phosphate + 2 H(+). Allows the formation of correctly charged Asn-tRNA(Asn) or Gln-tRNA(Gln) through the transamidation of misacylated Asp-tRNA(Asn) or Glu-tRNA(Gln) in organisms which lack either or both of asparaginyl-tRNA or glutaminyl-tRNA synthetases. The reaction takes place in the presence of glutamine and ATP through an activated phospho-Asp-tRNA(Asn) or phospho-Glu-tRNA(Gln). The protein is Aspartyl/glutamyl-tRNA(Asn/Gln) amidotransferase subunit C of Rickettsia typhi (strain ATCC VR-144 / Wilmington).